Here is a 420-residue protein sequence, read N- to C-terminus: Glutamate-1-semialdehyde 2,1-aminomutase (420 aa).

The residue at position 261 (Lys261) is an N6-(pyridoxal phosphate)lysine.

The protein belongs to the class-III pyridoxal-phosphate-dependent aminotransferase family. HemL subfamily. The cofactor is pyridoxal 5'-phosphate.

The protein resides in the cytoplasm. The enzyme catalyses (S)-4-amino-5-oxopentanoate = 5-aminolevulinate. It functions in the pathway porphyrin-containing compound metabolism; protoporphyrin-IX biosynthesis; 5-aminolevulinate from L-glutamyl-tRNA(Glu): step 2/2. The chain is Glutamate-1-semialdehyde 2,1-aminomutase from Thermoplasma volcanium (strain ATCC 51530 / DSM 4299 / JCM 9571 / NBRC 15438 / GSS1).